The chain runs to 749 residues: Phototropin (749 aa).

The region spanning 7-80 is the PAS 1 domain; sequence PASQLTKVLA…QKIRDAIKKG (74 aa). FMN-binding positions include 56–61, arginine 74, asparagine 89, asparagine 99, and glutamine 120; that span reads NCRFLQ. Cysteine 57 is subject to S-4a-FMN cysteine. The 55-residue stretch at 81-135 folds into the PAC 1 domain; sequence EACSVRLLNYRKDGTPFWNLLTVTPIKTPDGRVSKFVGVQVDVTSKTEGKALADN. One can recognise a PAS 2 domain in the interval 200-273; that stretch reads VALDLATTVE…DQIRAAIKEG (74 aa). Positions 274 to 328 constitute a PAC 2 domain; it reads SELTVRILNYTKAGKAFWNMFTLAPMRDQDGHARFFVGVQVDVTAQSTSPDKAPV. The 309-residue stretch at 404–712 folds into the Protein kinase domain; it reads FRRVKQLGAG…ANEIKSHPWF (309 aa). ATP-binding positions include 410-418 and lysine 433; that span reads LGAGDVGLV. The Proton acceptor role is filled by aspartate 529. Disordered stretches follow at residues 563-591 and 729-749; these read KIGG…SSSG and PRRA…FDNY. Residues 713–749 form the AGC-kinase C-terminal domain; that stretch reads KGINWALLRHQQPPYVPRRASKAAGGSSTGGAAFDNY. Residues 734–749 show a composition bias toward low complexity; it reads KAAGGSSTGGAAFDNY.

This sequence belongs to the protein kinase superfamily. AGC Ser/Thr protein kinase family. Requires FMN as cofactor. Post-translationally, autophosphorylated in response to blue light irradiation. 2 molecules of FMN bind covalently to cysteines after exposure to blue light and are reversed in the dark. Expressed in gametes, pre-gametes and gametes generated by pre-gametes (at protein level).

The protein localises to the membrane. It catalyses the reaction L-seryl-[protein] + ATP = O-phospho-L-seryl-[protein] + ADP + H(+). It carries out the reaction L-threonyl-[protein] + ATP = O-phospho-L-threonyl-[protein] + ADP + H(+). Its function is as follows. Protein kinase that acts as a blue light photoreceptor. Required for non-photochemical quenching (NPQ), a mechanism that converts and dissipates the harmful excess absorbed light energy into heat and protect the photosynthetic apparatus from photo-oxidative damage. Controls the energy-dependent chlorophyll fluorescence quenching (qE) activity of chlorophyll excited states by inducing the expression of the qE effector protein LHCSR3 in high light intensities. This Chlamydomonas reinhardtii (Chlamydomonas smithii) protein is Phototropin.